A 122-amino-acid polypeptide reads, in one-letter code: Interferon alpha-inducible protein 27, mitochondrial (122 aa).

Residues 1 to 33 constitute a mitochondrion transit peptide; the sequence is MEASALTSSAVTSVAKVVRVASGSAVVLPLARI. A helical transmembrane segment spans residues 34–57; that stretch reads ATVVIGGVVAMAAVPMVLSAMGFT. K69 is covalently cross-linked (Glycyl lysine isopeptide (Lys-Gly) (interchain with G-Cter in ubiquitin)). The next 2 membrane-spanning stretches (helical) occupy residues 71-91 and 99-119; these read MSAA…VATL and LSGL…AVIA. The mediates interaction with SKP2 and hepatitis C virus non-structural protein NS5A stretch occupies residues 76–122; it reads IANGGGVASGSLVATLQSLGATGLSGLTKFILGSIGSAIAAVIARFY. Residues 103–112 form a required for hepatitis C virus non-structural protein NS5A degradation region; that stretch reads TKFILGSIGS.

Belongs to the IFI6/IFI27 family. Homodimer. Interacts with hepatitis C virus/HCV non-structural protein NS5A; promotes the ubiquitin-mediated proteasomal degradation of NS5A. Interacts with SKP2; promotes the ubiquitin-mediated proteasomal degradation of NS5A. Interacts with NR4A1. May interact with BCL2. Ubiquitinated by TRIM21 via 'Lys-6'-linked ubiquitin chains leading to IFI27 mitochondrial migration.

The protein localises to the mitochondrion membrane. Its subcellular location is the nucleus inner membrane. It is found in the endoplasmic reticulum membrane. In terms of biological role, probable adapter protein involved in different biological processes. Part of the signaling pathways that lead to apoptosis. Involved in type-I interferon-induced apoptosis characterized by a rapid and robust release of cytochrome C from the mitochondria and activation of BAX and caspases 2, 3, 6, 8 and 9. Also functions in TNFSF10-induced apoptosis. May also have a function in the nucleus, where it may be involved in the interferon-induced negative regulation of the transcriptional activity of NR4A1, NR4A2 and NR4A3 through the enhancement of XPO1-mediated nuclear export of these nuclear receptors. May thereby play a role in the vascular response to injury. In the innate immune response, has an antiviral activity towards hepatitis C virus/HCV. May prevent the replication of the virus by recruiting both the hepatitis C virus non-structural protein 5A/NS5A and the ubiquitination machinery via SKP2, promoting the ubiquitin-mediated proteasomal degradation of NS5A. Also promotes virus-induced pyroptosis by activating CASP3 in the mitochondria after 'Lys-6'-linked ubiquitination by TRIM21. The polypeptide is Interferon alpha-inducible protein 27, mitochondrial (Homo sapiens (Human)).